A 560-amino-acid polypeptide reads, in one-letter code: Putative transport protein VSAL_I2029 (560 aa).

Transmembrane regions (helical) follow at residues 14–34 (ILLLFVVLALGLFIAKVKIGS), 37–57 (LGSSIGVLITALFMGSLGYTF), 66–86 (FMLFIFCVGIEAGPNFFGIFL), 94–114 (LLVLVVLISAISLSFLTGYYF), and 161–181 (NLSVGYAFSYLIGLTSLILLA). RCK C-terminal domains lie at 203 to 292 (RGIG…FRNG) and 293 to 376 (KEVF…KIGF). 5 helical membrane passes run 386 to 406 (LLAFCSFFILGIMFGMITMSF), 409 to 429 (VTFGLGNAVGLLISGITLGFL), 451 to 471 (GLLVFMVGIGLSAGGNIIEYF), 478 to 498 (VLAAALIVSVIPVILAYLVGA), and 539 to 559 (AGTYAIANILMTVAGTIMILL).

Belongs to the AAE transporter (TC 2.A.81) family. YbjL subfamily.

The protein resides in the cell membrane. This chain is Putative transport protein VSAL_I2029, found in Aliivibrio salmonicida (strain LFI1238) (Vibrio salmonicida (strain LFI1238)).